The primary structure comprises 192 residues: Group XIIA secretory phospholipase A2 (192 aa).

The first 25 residues, 1-25, serve as a signal peptide directing secretion; sequence MVTPRPAPARSPALLLLLLLATARG. The Ca(2+) site is built by G91, P93, and F95. The active site involves H113. D114 is a binding site for Ca(2+). The active site involves D128.

The protein belongs to the phospholipase A2 family. It depends on Ca(2+) as a cofactor.

It localises to the secreted. The protein resides in the cytoplasm. It catalyses the reaction a 1,2-diacyl-sn-glycero-3-phosphocholine + H2O = a 1-acyl-sn-glycero-3-phosphocholine + a fatty acid + H(+). Functionally, PA2 catalyzes the calcium-dependent hydrolysis of the 2-acyl groups in 3-sn-phosphoglycerides. Does not exhibit detectable activity toward sn-2-arachidonoyl- or linoleoyl-phosphatidylcholine or -phosphatidylethanolamine. The protein is Group XIIA secretory phospholipase A2 (Pla2g12a) of Mus musculus (Mouse).